An 85-amino-acid polypeptide reads, in one-letter code: Glutaredoxin (85 aa).

The Glutaredoxin domain maps to methionine 1–proline 85. The cysteines at positions 12 and 15 are disulfide-linked.

It belongs to the glutaredoxin family. In terms of assembly, monomer.

The protein resides in the cytoplasm. Functionally, has a glutathione-disulfide oxidoreductase activity in the presence of NADPH and glutathione reductase. Reduces low molecular weight disulfides and proteins. This is Glutaredoxin (grx) from Neisseria meningitidis serogroup A / serotype 4A (strain DSM 15465 / Z2491).